We begin with the raw amino-acid sequence, 155 residues long: METQRASLSLGRCSLWLLLLGLALPSASAQVLSYREAVLRAVDQLNEQSSEPNIYRLLELDQPPQDDEDPDSPKRVSFRVKETVCPRTTQQPPEQCDFKENGLLKRCEGTVTLDQVRGNFDITCNNHQSIRITKQPWAPPQAARICRIIFLRVCR.

Residues 1–29 (METQRASLSLGRCSLWLLLLGLALPSASA) form the signal peptide. Gln-30 carries the pyrrolidone carboxylic acid modification. A propeptide spanning residues 30–143 (QVLSYREAVL…KQPWAPPQAA (114 aa)) is cleaved from the precursor. 3 disulfide bridges follow: Cys-85/Cys-96, Cys-107/Cys-124, and Cys-146/Cys-154.

Belongs to the cathelicidin family.

The protein localises to the secreted. In terms of biological role, potent microbicidal activity; active against S.aureus and E.coli. This is Cathelicidin-1 (CATHL1A) from Ovis aries (Sheep).